The following is a 747-amino-acid chain: Elongation factor G, mitochondrial (747 aa).

Residues 1 to 32 (MTLITRVLNSNLPLRLSALKTVRQLQCGYSSH) constitute a mitochondrion transit peptide. The region spanning 42–319 (ERIRNIGISA…AIIDYLPNPG (278 aa)) is the tr-type G domain. GTP contacts are provided by residues 51–58 (AHIDSGKT), 118–122 (DTPGH), and 172–175 (NKLD).

It belongs to the TRAFAC class translation factor GTPase superfamily. Classic translation factor GTPase family. EF-G/EF-2 subfamily.

Its subcellular location is the mitochondrion. Its pathway is protein biosynthesis; polypeptide chain elongation. Mitochondrial GTPase that catalyzes the GTP-dependent ribosomal translocation step during translation elongation. During this step, the ribosome changes from the pre-translocational (PRE) to the post-translocational (POST) state as the newly formed A-site-bound peptidyl-tRNA and P-site-bound deacylated tRNA move to the P and E sites, respectively. Catalyzes the coordinated movement of the two tRNA molecules, the mRNA and conformational changes in the ribosome. Essential during development as it acts as a retrograde signal from mitochondria to the nucleus to slow down cell proliferation if mitochondrial energy output is low. This Drosophila virilis (Fruit fly) protein is Elongation factor G, mitochondrial.